Reading from the N-terminus, the 459-residue chain is ATP synthase subunit beta (459 aa).

147-154 (GGAGVGKT) contributes to the ATP binding site.

It belongs to the ATPase alpha/beta chains family. F-type ATPases have 2 components, CF(1) - the catalytic core - and CF(0) - the membrane proton channel. CF(1) has five subunits: alpha(3), beta(3), gamma(1), delta(1), epsilon(1). CF(0) has three main subunits: a(1), b(2) and c(9-12). The alpha and beta chains form an alternating ring which encloses part of the gamma chain. CF(1) is attached to CF(0) by a central stalk formed by the gamma and epsilon chains, while a peripheral stalk is formed by the delta and b chains.

The protein localises to the cell inner membrane. The enzyme catalyses ATP + H2O + 4 H(+)(in) = ADP + phosphate + 5 H(+)(out). Its function is as follows. Produces ATP from ADP in the presence of a proton gradient across the membrane. The catalytic sites are hosted primarily by the beta subunits. This is ATP synthase subunit beta from Hydrogenovibrio crunogenus (strain DSM 25203 / XCL-2) (Thiomicrospira crunogena).